The primary structure comprises 237 residues: Survival of motor neuron-related-splicing factor 30 (237 aa).

Polar residues predominate over residues 52–69 (SQPAEGTTSTKSSETVAP). Disordered regions lie at residues 52–73 (SQPAEGTTSTKSSETVAPSHSW) and 149–198 (REYK…RSIF). Residues 72 to 132 (SWRVGDHCMA…KKVEEGRIRD (61 aa)) enclose the Tudor domain. Positions 142-160 (KELQAEQREYKKKKAQKKV) match the Nuclear localization signal motif. Residues 151–161 (YKKKKAQKKVQ) are compositionally biased toward basic residues. Basic and acidic residues predominate over residues 162–175 (RMKELEQEREDQKS). Residues 176 to 185 (KWQQFNNKAY) show a composition bias toward polar residues.

It belongs to the SMN family. As to quaternary structure, associates with spliceosomes.

The protein resides in the nucleus speckle. The protein localises to the nucleus. Its subcellular location is the cajal body. In terms of biological role, involved in spliceosome assembly. In Danio rerio (Zebrafish), this protein is Survival of motor neuron-related-splicing factor 30 (smndc1).